Consider the following 99-residue polypeptide: Nucleoid-associated protein SPy_1862/M5005_Spy1580 (99 aa).

It belongs to the YbaB/EbfC family. Homodimer.

It is found in the cytoplasm. The protein localises to the nucleoid. Functionally, binds to DNA and alters its conformation. May be involved in regulation of gene expression, nucleoid organization and DNA protection. In Streptococcus pyogenes serotype M1, this protein is Nucleoid-associated protein SPy_1862/M5005_Spy1580.